We begin with the raw amino-acid sequence, 309 residues long: Taste receptor type 2 member 43 (309 aa).

A topological domain (extracellular) is located at residue methionine 1. A helical membrane pass occupies residues 2–22 (ITFLPIIFSSLVVVTFVIGNF). The Cytoplasmic segment spans residues 23-46 (ANGFIALVNSIEWFKRQKISFADQ). Residues 47 to 67 (ILTALAVSRVGLLWVLLLNWY) traverse the membrane as a helical segment. Residues 68–86 (STVLNPAFNSVEVRTTAYN) are Extracellular-facing. The chain crosses the membrane as a helical span at residues 87–107 (IWAVINHFSNWLATTLSIFYL). The Cytoplasmic segment spans residues 108–126 (LKIANFSNFIFLHLKRRVK). A helical membrane pass occupies residues 127 to 147 (SVILVMLLGPLLFLACHLFVI). The Extracellular segment spans residues 148–178 (NMNEIVRTKEFEGNMTWKIKLKSAMYFSNMT). 2 N-linked (GlcNAc...) asparagine glycosylation sites follow: asparagine 161 and asparagine 176. The chain crosses the membrane as a helical span at residues 179–199 (VTMVANLVPFTLTLLSFMLLI). The Cytoplasmic segment spans residues 200-229 (CSLCKHLKKMQLHGKGSQDPSTKVHIKALQ). Residues 230–250 (TVISFLLLCAIYFLSIMISVW) form a helical membrane-spanning segment. Residues 251-259 (SFGSLENKP) are Extracellular-facing. A helical membrane pass occupies residues 260 to 280 (VFMFCKAIRFSYPSIHPFILI). The Cytoplasmic portion of the chain corresponds to 281–309 (WGNKKLKQTFLSVFWQMRYWVKGEKTSSP).

The protein belongs to the G-protein coupled receptor T2R family. Expressed in subsets of taste receptor cells of the tongue and exclusively in gustducin-positive cells. Expressed in airway epithelia.

It is found in the membrane. The protein resides in the cell projection. Its subcellular location is the cilium membrane. Gustducin-coupled receptor immplicated in the perception of bitter compounds in the oral cavity and the gastrointestinal tract. Signals through PLCB2 and the calcium-regulated cation channel TRPM5. Activated by the sulfonyl amide sweeteners saccharin and acesulfame K. In airway epithelial cells, binding of bitter compounds increases the intracellular calcium ion concentration and stimulates ciliary beat frequency. May act as chemosensory receptors in airway epithelial cells to detect and eliminate potential noxious agents from the airways. This chain is Taste receptor type 2 member 43 (TAS2R43), found in Homo sapiens (Human).